Here is a 184-residue protein sequence, read N- to C-terminus: Photosystem I assembly protein Ycf4 (184 aa).

Transmembrane regions (helical) follow at residues 21–43 and 58–80; these read NFCW…ISSY and LFFP…SSYL.

It belongs to the Ycf4 family.

Its subcellular location is the plastid. It localises to the chloroplast thylakoid membrane. Functionally, seems to be required for the assembly of the photosystem I complex. In Carpobrotus chilensis (Sea fig), this protein is Photosystem I assembly protein Ycf4.